The chain runs to 207 residues: Fibroblast growth factor 18 (207 aa).

Positions 1 to 27 are cleaved as a signal peptide; it reads MYSAPSACTCLCLHFLLLCFQVQVLAA. Asparagine 39 carries N-linked (GlcNAc...) asparagine glycosylation. The cysteines at positions 109 and 127 are disulfide-linked. Residue asparagine 137 is glycosylated (N-linked (GlcNAc...) asparagine). The interval 157–183 is disordered; the sequence is GRPRKGPKTRENQQDVHFMKRYPKGQT. Residues 164–174 are compositionally biased toward basic and acidic residues; sequence KTRENQQDVHF.

This sequence belongs to the heparin-binding growth factors family. As to quaternary structure, interacts with FGFR3 and FGFR4. In terms of tissue distribution, mainly expressed in the lung. Not detected in brain, heart, liver, kidney and small intestine.

The protein resides in the secreted. Plays an important role in the regulation of cell proliferation, cell differentiation and cell migration. Required for normal ossification and bone development. Stimulates hepatic and intestinal proliferation. In Rattus norvegicus (Rat), this protein is Fibroblast growth factor 18 (Fgf18).